Consider the following 309-residue polypeptide: Protein EXORDIUM-like 1 (309 aa).

The N-terminal stretch at 1-23 (MASFVMGYFLLFAVAFMCLDART) is a signal peptide.

This sequence belongs to the EXORDIUM family.

It localises to the secreted. The protein resides in the extracellular space. The protein localises to the apoplast. Functionally, may play a role in a brassinosteroid-dependent regulatory pathway that controls growth and development under low carbon and energy availability. This Arabidopsis thaliana (Mouse-ear cress) protein is Protein EXORDIUM-like 1 (EXL1).